We begin with the raw amino-acid sequence, 506 residues long: Histidine ammonia-lyase (506 aa).

Positions 143–145 (ASG) form a cross-link, 5-imidazolinone (Ala-Gly). Ser-144 bears the 2,3-didehydroalanine (Ser) mark.

Belongs to the PAL/histidase family. Contains an active site 4-methylidene-imidazol-5-one (MIO), which is formed autocatalytically by cyclization and dehydration of residues Ala-Ser-Gly.

It localises to the cytoplasm. The enzyme catalyses L-histidine = trans-urocanate + NH4(+). It functions in the pathway amino-acid degradation; L-histidine degradation into L-glutamate; N-formimidoyl-L-glutamate from L-histidine: step 1/3. In Salmonella paratyphi A (strain ATCC 9150 / SARB42), this protein is Histidine ammonia-lyase.